A 144-amino-acid chain; its full sequence is 3-hydroxyacyl-[acyl-carrier-protein] dehydratase FabZ (144 aa).

His-48 is an active-site residue.

It belongs to the thioester dehydratase family. FabZ subfamily.

The protein localises to the cytoplasm. It carries out the reaction a (3R)-hydroxyacyl-[ACP] = a (2E)-enoyl-[ACP] + H2O. Functionally, involved in unsaturated fatty acids biosynthesis. Catalyzes the dehydration of short chain beta-hydroxyacyl-ACPs and long chain saturated and unsaturated beta-hydroxyacyl-ACPs. The protein is 3-hydroxyacyl-[acyl-carrier-protein] dehydratase FabZ of Listeria innocua serovar 6a (strain ATCC BAA-680 / CLIP 11262).